The primary structure comprises 568 residues: Urease subunit alpha (568 aa).

In terms of domain architecture, Urease spans 131–568 (GGMDAHIHFI…LPLAQRYFLY (438 aa)). The Ni(2+) site is built by H136, H138, and K219. K219 is subject to N6-carboxylysine. Position 221 (H221) interacts with substrate. Ni(2+)-binding residues include H248 and H274. H322 (proton donor) is an active-site residue. D362 is a binding site for Ni(2+).

Belongs to the metallo-dependent hydrolases superfamily. Urease alpha subunit family. As to quaternary structure, heterotrimer of UreA (gamma), UreB (beta) and UreC (alpha) subunits. Three heterotrimers associate to form the active enzyme. It depends on Ni cation as a cofactor. Carboxylation allows a single lysine to coordinate two nickel ions.

It is found in the cytoplasm. It carries out the reaction urea + 2 H2O + H(+) = hydrogencarbonate + 2 NH4(+). The protein operates within nitrogen metabolism; urea degradation; CO(2) and NH(3) from urea (urease route): step 1/1. The polypeptide is Urease subunit alpha (Cereibacter sphaeroides (strain KD131 / KCTC 12085) (Rhodobacter sphaeroides)).